We begin with the raw amino-acid sequence, 433 residues long: uncharacterized protein (433 aa).

Residues 61-178 (RFNHSLGVYE…QIDADRMDYL (118 aa)) enclose the HD domain.

This is an uncharacterized protein from Bacillus subtilis (strain 168).